We begin with the raw amino-acid sequence, 190 residues long: Large ribosomal subunit protein uL5 (190 aa).

It belongs to the universal ribosomal protein uL5 family. As to quaternary structure, part of the 50S ribosomal subunit; part of the 5S rRNA/L5/L18/L25 subcomplex. Contacts the 5S rRNA and the P site tRNA. Forms a bridge to the 30S subunit in the 70S ribosome.

Functionally, this is one of the proteins that bind and probably mediate the attachment of the 5S RNA into the large ribosomal subunit, where it forms part of the central protuberance. In the 70S ribosome it contacts protein S13 of the 30S subunit (bridge B1b), connecting the 2 subunits; this bridge is implicated in subunit movement. Contacts the P site tRNA; the 5S rRNA and some of its associated proteins might help stabilize positioning of ribosome-bound tRNAs. The chain is Large ribosomal subunit protein uL5 from Bifidobacterium adolescentis (strain ATCC 15703 / DSM 20083 / NCTC 11814 / E194a).